We begin with the raw amino-acid sequence, 134 residues long: Profilin-1 (134 aa).

A disulfide bridge connects residues Cys13 and Cys118. An Involved in PIP2 interaction motif is present at residues 84 to 100 (AVIRGKKGSGGITIKKT). The residue at position 114 (Thr114) is a Phosphothreonine.

It belongs to the profilin family. Occurs in many kinds of cells as a complex with monomeric actin in a 1:1 ratio. Phosphorylated by MAP kinases.

The protein resides in the cytoplasm. It localises to the cytoskeleton. In terms of biological role, binds to actin and affects the structure of the cytoskeleton. At high concentrations, profilin prevents the polymerization of actin, whereas it enhances it at low concentrations. The protein is Profilin-1 of Olea europaea (Common olive).